Consider the following 428-residue polypeptide: Glutamate-1-semialdehyde 2,1-aminomutase 1 (428 aa).

Lys-267 is modified (N6-(pyridoxal phosphate)lysine).

The protein belongs to the class-III pyridoxal-phosphate-dependent aminotransferase family. HemL subfamily. In terms of assembly, homodimer. The cofactor is pyridoxal 5'-phosphate.

The protein resides in the cytoplasm. It carries out the reaction (S)-4-amino-5-oxopentanoate = 5-aminolevulinate. It participates in porphyrin-containing compound metabolism; protoporphyrin-IX biosynthesis; 5-aminolevulinate from L-glutamyl-tRNA(Glu): step 2/2. This Staphylococcus aureus (strain Mu3 / ATCC 700698) protein is Glutamate-1-semialdehyde 2,1-aminomutase 1.